Reading from the N-terminus, the 427-residue chain is Dihydroorotase (427 aa).

2 residues coordinate Zn(2+): His-60 and His-62. Substrate is bound by residues 62–64 (HLR) and Asn-94. Zn(2+) contacts are provided by Asp-152, His-179, and His-232. Asn-278 is a substrate binding site. Residue Asp-305 coordinates Zn(2+). Residue Asp-305 is part of the active site. Residues His-309 and 323–324 (FG) each bind substrate.

The protein belongs to the metallo-dependent hydrolases superfamily. DHOase family. Class I DHOase subfamily. The cofactor is Zn(2+).

It carries out the reaction (S)-dihydroorotate + H2O = N-carbamoyl-L-aspartate + H(+). It functions in the pathway pyrimidine metabolism; UMP biosynthesis via de novo pathway; (S)-dihydroorotate from bicarbonate: step 3/3. Catalyzes the reversible cyclization of carbamoyl aspartate to dihydroorotate. The sequence is that of Dihydroorotase from Bacillus caldolyticus.